We begin with the raw amino-acid sequence, 273 residues long: ATP synthase subunit a (273 aa).

The next 5 helical transmembrane spans lie at Trp-44–Tyr-64, Ile-104–Ile-124, Asp-149–Ile-169, Leu-223–Trp-243, and Ala-244–Val-264.

It belongs to the ATPase A chain family. In terms of assembly, F-type ATPases have 2 components, CF(1) - the catalytic core - and CF(0) - the membrane proton channel. CF(1) has five subunits: alpha(3), beta(3), gamma(1), delta(1), epsilon(1). CF(0) has three main subunits: a(1), b(2) and c(9-12). The alpha and beta chains form an alternating ring which encloses part of the gamma chain. CF(1) is attached to CF(0) by a central stalk formed by the gamma and epsilon chains, while a peripheral stalk is formed by the delta and b chains.

The protein resides in the cell inner membrane. Its function is as follows. Key component of the proton channel; it plays a direct role in the translocation of protons across the membrane. This Shewanella putrefaciens (strain CN-32 / ATCC BAA-453) protein is ATP synthase subunit a.